The chain runs to 176 residues: Skp1-related protein (176 aa).

This sequence belongs to the SKP1 family. In terms of assembly, probable component of the SCF(sel-10) E3 ubiquitin-protein ligase complex containing F-box domain-containing protein sel-10 as the substrate recognition component. Interacts with cul-1. May interact with the F-box protein mec-15. Interacts with dre-1. Interacts with syg-1. Interacts with sel-10. In terms of tissue distribution, ubiquitously expressed in the adult.

In terms of biological role, probable essential component of SCF (SKP1-CUL1-F-box protein) E3 ubiquitin-protein ligase complexes, which mediate the ubiquitination and subsequent proteasomal degradation of target proteins. Regulates cell proliferation during embryonic and larval development. Involved in synapse elimination in early synapse development. May negatively regulate the apoptotic activity of cep-1 in response to genotoxic stress. Plays a role in sex determination. The chain is Skp1-related protein from Caenorhabditis elegans.